The sequence spans 353 residues: Photosystem II protein D1 (353 aa).

The residue at position 2 (T2) is an N-acetylthreonine. T2 bears the Phosphothreonine mark. Helical transmembrane passes span 29 to 46 (YIGW…TATS), 118 to 133 (HFFI…EWEL), and 142 to 156 (WIAV…AATA). H118 provides a ligand contact to chlorophyll a. Y126 provides a ligand contact to pheophytin a. [CaMn4O5] cluster is bound by residues D170 and E189. A helical membrane pass occupies residues 197–218 (FHMLGVAGVFGGSLFSAMHGSL). Residue H198 coordinates chlorophyll a. Residues H215 and 264-265 (SF) contribute to the a quinone site. H215 contacts Fe cation. H272 is a binding site for Fe cation. A helical membrane pass occupies residues 274 to 288 (FLAIWPVVGIWFTAL). [CaMn4O5] cluster-binding residues include H332, E333, D342, and A344. A propeptide spanning residues 345-353 (SVEAPSING) is cleaved from the precursor.

The protein belongs to the reaction center PufL/M/PsbA/D family. In terms of assembly, PSII is composed of 1 copy each of membrane proteins PsbA, PsbB, PsbC, PsbD, PsbE, PsbF, PsbH, PsbI, PsbJ, PsbK, PsbL, PsbM, PsbT, PsbX, PsbY, PsbZ, Psb30/Ycf12, at least 3 peripheral proteins of the oxygen-evolving complex and a large number of cofactors. It forms dimeric complexes. The D1/D2 heterodimer binds P680, chlorophylls that are the primary electron donor of PSII, and subsequent electron acceptors. It shares a non-heme iron and each subunit binds pheophytin, quinone, additional chlorophylls, carotenoids and lipids. D1 provides most of the ligands for the Mn4-Ca-O5 cluster of the oxygen-evolving complex (OEC). There is also a Cl(-1) ion associated with D1 and D2, which is required for oxygen evolution. The PSII complex binds additional chlorophylls, carotenoids and specific lipids. serves as cofactor. Post-translationally, tyr-161 forms a radical intermediate that is referred to as redox-active TyrZ, YZ or Y-Z. In terms of processing, C-terminally processed by CTPA; processing is essential to allow assembly of the oxygen-evolving complex and thus photosynthetic growth.

It is found in the plastid. The protein localises to the chloroplast thylakoid membrane. It catalyses the reaction 2 a plastoquinone + 4 hnu + 2 H2O = 2 a plastoquinol + O2. Functionally, photosystem II (PSII) is a light-driven water:plastoquinone oxidoreductase that uses light energy to abstract electrons from H(2)O, generating O(2) and a proton gradient subsequently used for ATP formation. It consists of a core antenna complex that captures photons, and an electron transfer chain that converts photonic excitation into a charge separation. The D1/D2 (PsbA/PsbD) reaction center heterodimer binds P680, the primary electron donor of PSII as well as several subsequent electron acceptors. The chain is Photosystem II protein D1 from Stigeoclonium helveticum (Green alga).